Reading from the N-terminus, the 218-residue chain is Ribose-5-phosphate isomerase A (218 aa).

Residues 28–31, 81–84, and 94–97 each bind substrate; these read TGST, DGAD, and KGGG. Glutamate 103 acts as the Proton acceptor in catalysis. Position 121 (lysine 121) interacts with substrate.

The protein belongs to the ribose 5-phosphate isomerase family. As to quaternary structure, homodimer.

It catalyses the reaction aldehydo-D-ribose 5-phosphate = D-ribulose 5-phosphate. It functions in the pathway carbohydrate degradation; pentose phosphate pathway; D-ribose 5-phosphate from D-ribulose 5-phosphate (non-oxidative stage): step 1/1. Catalyzes the reversible conversion of ribose-5-phosphate to ribulose 5-phosphate. This is Ribose-5-phosphate isomerase A from Vibrio cholerae serotype O1 (strain ATCC 39541 / Classical Ogawa 395 / O395).